The chain runs to 224 residues: 7-cyano-7-deazaguanine synthase (224 aa).

An ATP-binding site is contributed by 10–20; the sequence is LSGGLDSATVV. 4 residues coordinate Zn(2+): cysteine 189, cysteine 199, cysteine 202, and cysteine 205.

This sequence belongs to the QueC family. Requires Zn(2+) as cofactor.

The catalysed reaction is 7-carboxy-7-deazaguanine + NH4(+) + ATP = 7-cyano-7-deazaguanine + ADP + phosphate + H2O + H(+). It functions in the pathway purine metabolism; 7-cyano-7-deazaguanine biosynthesis. Its function is as follows. Catalyzes the ATP-dependent conversion of 7-carboxy-7-deazaguanine (CDG) to 7-cyano-7-deazaguanine (preQ(0)). The sequence is that of 7-cyano-7-deazaguanine synthase from Pseudomonas putida (strain ATCC 47054 / DSM 6125 / CFBP 8728 / NCIMB 11950 / KT2440).